Consider the following 243-residue polypeptide: Orotidine 5'-phosphate decarboxylase (243 aa).

Residues Asp-16, Lys-38, 65–74, Thr-120, Arg-181, Gln-190, Gly-210, and Arg-211 contribute to the substrate site; that span reads DLKLHDIPNT. Catalysis depends on Lys-67, which acts as the Proton donor.

The protein belongs to the OMP decarboxylase family. Type 1 subfamily. As to quaternary structure, homodimer.

The enzyme catalyses orotidine 5'-phosphate + H(+) = UMP + CO2. It functions in the pathway pyrimidine metabolism; UMP biosynthesis via de novo pathway; UMP from orotate: step 2/2. Catalyzes the decarboxylation of orotidine 5'-monophosphate (OMP) to uridine 5'-monophosphate (UMP). This is Orotidine 5'-phosphate decarboxylase from Bradyrhizobium sp. (strain ORS 278).